A 471-amino-acid chain; its full sequence is Probable flavin-containing monoamine oxidase B (471 aa).

Cys-406 is modified (S-8alpha-FAD cysteine).

It belongs to the flavin monoamine oxidase family. The cofactor is FAD.

The enzyme catalyses a secondary aliphatic amine + O2 + H2O = a primary amine + an aldehyde + H2O2. In Dictyostelium discoideum (Social amoeba), this protein is Probable flavin-containing monoamine oxidase B (maoB-1).